The sequence spans 451 residues: MRGTLATALLLVASCRIAAESNQINPQQASHHVGTTLNKLFTKSSPRRFLRDNREQRVALALTAANESRTIENAVTSAVHGITDASTTTAATRDAARDILNQHAFPKEGIRPQFDLNLPPSETSALLTGASNIPQRNHAFSSITSGIAVSSSRTSNQRTAKTQANLDMSHQGTVRKTLSKTQFKNPAASKSTKRRKKARIIPPFVVNKVDTLYREHLTAKSLEFDPTIKETEAMLKLYVESTVDPLPVSTVHFNHFRYFKDQDLTLLKEKLGTTLESALSTLAALNLPPGMLKAIERPFVWYASLARWRAMYCDFFEFLNANSNKIATSLPNVEFFGGETSSTVRDQLLATLKEEMKTRTKTRRNGKIMNDLKVVLAKYNVEEEIKAAIRGLGEQFLKRDHEIIPLQRHSRRSPASQSRSNNQRTGLTPYGLQIPGPERDSFRHIESNKHA.

A signal peptide spans 1–19 (MRGTLATALLLVASCRIAA). The RxLR-dEER signature appears at 48–69 (RFLRDNREQRVALALTAANESR). Asn-66 is a glycosylation site (N-linked (GlcNAc...) asparagine). Composition is skewed to polar residues over residues 175 to 184 (RKTLSKTQFK) and 413 to 426 (SPAS…QRTG). Disordered stretches follow at residues 175 to 194 (RKTL…STKR) and 404 to 451 (IPLQ…NKHA). Over residues 437 to 451 (PERDSFRHIESNKHA) the composition is skewed to basic and acidic residues.

The protein belongs to the RxLR effector family.

The protein resides in the secreted. It localises to the host nucleus. In terms of biological role, secreted effector that acts as an elicitor that induces cell death in host plant cells. This chain is Secreted RxLR effector protein 111, found in Plasmopara viticola (Downy mildew of grapevine).